A 212-amino-acid polypeptide reads, in one-letter code: Pyridoxine/pyridoxamine 5'-phosphate oxidase (212 aa).

Substrate is bound by residues 8–11 and lysine 66; that span reads RRTY. Residues 61–66, 76–77, arginine 82, lysine 83, and glutamine 105 each bind FMN; these read RIVLLK and FT. Substrate-binding residues include tyrosine 123, arginine 127, and serine 131. Residues 140–141 and tryptophan 184 contribute to the FMN site; that span reads QS. A substrate-binding site is contributed by 190-192; sequence RLH. Arginine 194 provides a ligand contact to FMN.

The protein belongs to the pyridoxamine 5'-phosphate oxidase family. As to quaternary structure, homodimer. It depends on FMN as a cofactor.

It catalyses the reaction pyridoxamine 5'-phosphate + O2 + H2O = pyridoxal 5'-phosphate + H2O2 + NH4(+). The enzyme catalyses pyridoxine 5'-phosphate + O2 = pyridoxal 5'-phosphate + H2O2. Its pathway is cofactor metabolism; pyridoxal 5'-phosphate salvage; pyridoxal 5'-phosphate from pyridoxamine 5'-phosphate: step 1/1. It participates in cofactor metabolism; pyridoxal 5'-phosphate salvage; pyridoxal 5'-phosphate from pyridoxine 5'-phosphate: step 1/1. Functionally, catalyzes the oxidation of either pyridoxine 5'-phosphate (PNP) or pyridoxamine 5'-phosphate (PMP) into pyridoxal 5'-phosphate (PLP). The sequence is that of Pyridoxine/pyridoxamine 5'-phosphate oxidase from Cupriavidus taiwanensis (strain DSM 17343 / BCRC 17206 / CCUG 44338 / CIP 107171 / LMG 19424 / R1) (Ralstonia taiwanensis (strain LMG 19424)).